The primary structure comprises 156 residues: ATP synthase subunit b (156 aa).

Residues 12 to 32 (VAFFIFVLFCMKFVWPPVIAA) form a helical membrane-spanning segment.

The protein belongs to the ATPase B chain family. As to quaternary structure, F-type ATPases have 2 components, F(1) - the catalytic core - and F(0) - the membrane proton channel. F(1) has five subunits: alpha(3), beta(3), gamma(1), delta(1), epsilon(1). F(0) has three main subunits: a(1), b(2) and c(10-14). The alpha and beta chains form an alternating ring which encloses part of the gamma chain. F(1) is attached to F(0) by a central stalk formed by the gamma and epsilon chains, while a peripheral stalk is formed by the delta and b chains.

It is found in the cell inner membrane. F(1)F(0) ATP synthase produces ATP from ADP in the presence of a proton or sodium gradient. F-type ATPases consist of two structural domains, F(1) containing the extramembraneous catalytic core and F(0) containing the membrane proton channel, linked together by a central stalk and a peripheral stalk. During catalysis, ATP synthesis in the catalytic domain of F(1) is coupled via a rotary mechanism of the central stalk subunits to proton translocation. Its function is as follows. Component of the F(0) channel, it forms part of the peripheral stalk, linking F(1) to F(0). The protein is ATP synthase subunit b of Pseudomonas paraeruginosa (strain DSM 24068 / PA7) (Pseudomonas aeruginosa (strain PA7)).